Consider the following 348-residue polypeptide: Holliday junction branch migration complex subunit RuvB (348 aa).

The tract at residues 4-184 (ADRLIAASGR…FGIVQRLEFY (181 aa)) is large ATPase domain (RuvB-L). ATP is bound by residues I23, R24, G65, K68, T69, T70, 131-133 (EDF), R174, Y184, and R221. T69 is a binding site for Mg(2+). The tract at residues 185 to 255 (SDKDLATIVS…VADLALNLLD (71 aa)) is small ATPAse domain (RuvB-S). Residues 258 to 348 (ERGFDHSDRR…GADFSEAGDE (91 aa)) are head domain (RuvB-H). DNA is bound by residues R294, R313, and R318.

The protein belongs to the RuvB family. In terms of assembly, homohexamer. Forms an RuvA(8)-RuvB(12)-Holliday junction (HJ) complex. HJ DNA is sandwiched between 2 RuvA tetramers; dsDNA enters through RuvA and exits via RuvB. An RuvB hexamer assembles on each DNA strand where it exits the tetramer. Each RuvB hexamer is contacted by two RuvA subunits (via domain III) on 2 adjacent RuvB subunits; this complex drives branch migration. In the full resolvosome a probable DNA-RuvA(4)-RuvB(12)-RuvC(2) complex forms which resolves the HJ.

It localises to the cytoplasm. It carries out the reaction ATP + H2O = ADP + phosphate + H(+). Its function is as follows. The RuvA-RuvB-RuvC complex processes Holliday junction (HJ) DNA during genetic recombination and DNA repair, while the RuvA-RuvB complex plays an important role in the rescue of blocked DNA replication forks via replication fork reversal (RFR). RuvA specifically binds to HJ cruciform DNA, conferring on it an open structure. The RuvB hexamer acts as an ATP-dependent pump, pulling dsDNA into and through the RuvAB complex. RuvB forms 2 homohexamers on either side of HJ DNA bound by 1 or 2 RuvA tetramers; 4 subunits per hexamer contact DNA at a time. Coordinated motions by a converter formed by DNA-disengaged RuvB subunits stimulates ATP hydrolysis and nucleotide exchange. Immobilization of the converter enables RuvB to convert the ATP-contained energy into a lever motion, pulling 2 nucleotides of DNA out of the RuvA tetramer per ATP hydrolyzed, thus driving DNA branch migration. The RuvB motors rotate together with the DNA substrate, which together with the progressing nucleotide cycle form the mechanistic basis for DNA recombination by continuous HJ branch migration. Branch migration allows RuvC to scan DNA until it finds its consensus sequence, where it cleaves and resolves cruciform DNA. This Pseudomonas putida (strain W619) protein is Holliday junction branch migration complex subunit RuvB.